Consider the following 369-residue polypeptide: Endo-1,4-beta-xylanase A (369 aa).

Positions 1 to 20 (MRKLTQFCLGLMLLPIAAVA) are cleaved as a signal peptide. Positions 21–367 (QNQPTMKDVL…KPVVKEIIKL (347 aa)) constitute a GH10 domain. Glu-156 acts as the Proton donor in catalysis. The active-site Nucleophile is the Glu-261.

The protein belongs to the glycosyl hydrolase 10 (cellulase F) family.

It carries out the reaction Endohydrolysis of (1-&gt;4)-beta-D-xylosidic linkages in xylans.. It functions in the pathway glycan degradation; xylan degradation. The protein is Endo-1,4-beta-xylanase A (xynA) of Xylanibacter ruminicola (Prevotella ruminicola).